The sequence spans 281 residues: NADPH-dependent 7-cyano-7-deazaguanine reductase (281 aa).

81–83 (VES) contributes to the substrate binding site. NADPH is bound at residue 83 to 84 (SK). Catalysis depends on C188, which acts as the Thioimide intermediate. Catalysis depends on D195, which acts as the Proton donor. 227–228 (HE) contributes to the substrate binding site. 256 to 257 (RG) serves as a coordination point for NADPH.

It belongs to the GTP cyclohydrolase I family. QueF type 2 subfamily. In terms of assembly, homodimer.

Its subcellular location is the cytoplasm. The enzyme catalyses 7-aminomethyl-7-carbaguanine + 2 NADP(+) = 7-cyano-7-deazaguanine + 2 NADPH + 3 H(+). It functions in the pathway tRNA modification; tRNA-queuosine biosynthesis. In terms of biological role, catalyzes the NADPH-dependent reduction of 7-cyano-7-deazaguanine (preQ0) to 7-aminomethyl-7-deazaguanine (preQ1). This chain is NADPH-dependent 7-cyano-7-deazaguanine reductase, found in Acidovorax ebreus (strain TPSY) (Diaphorobacter sp. (strain TPSY)).